The chain runs to 201 residues: Small ribosomal subunit protein uS4c (201 aa).

Positions 15–44 are disordered; the sequence is LGALPGLTNKRPRAGSDLRNQSRSGKKSQY. Residues 89–149 form the S4 RNA-binding domain; sequence MRLDNILFRL…DEQNSRALIQ (61 aa).

It belongs to the universal ribosomal protein uS4 family. Part of the 30S ribosomal subunit. Contacts protein S5. The interaction surface between S4 and S5 is involved in control of translational fidelity.

Its subcellular location is the plastid. It localises to the chloroplast. Functionally, one of the primary rRNA binding proteins, it binds directly to 16S rRNA where it nucleates assembly of the body of the 30S subunit. Its function is as follows. With S5 and S12 plays an important role in translational accuracy. This chain is Small ribosomal subunit protein uS4c (rps4), found in Daucus carota (Wild carrot).